Reading from the N-terminus, the 369-residue chain is Histidinol-phosphate aminotransferase 2 (369 aa).

Lysine 227 bears the N6-(pyridoxal phosphate)lysine mark.

It belongs to the class-II pyridoxal-phosphate-dependent aminotransferase family. Histidinol-phosphate aminotransferase subfamily. In terms of assembly, homodimer. It depends on pyridoxal 5'-phosphate as a cofactor.

It carries out the reaction L-histidinol phosphate + 2-oxoglutarate = 3-(imidazol-4-yl)-2-oxopropyl phosphate + L-glutamate. It functions in the pathway amino-acid biosynthesis; L-histidine biosynthesis; L-histidine from 5-phospho-alpha-D-ribose 1-diphosphate: step 7/9. The chain is Histidinol-phosphate aminotransferase 2 (hisC2) from Mesorhizobium japonicum (strain LMG 29417 / CECT 9101 / MAFF 303099) (Mesorhizobium loti (strain MAFF 303099)).